The sequence spans 236 residues: Orotidine 5'-phosphate decarboxylase (236 aa).

Substrate contacts are provided by residues D12, K34, D60–T69, T123, R184, Q193, G213, and R214. K62 serves as the catalytic Proton donor.

Belongs to the OMP decarboxylase family. Type 1 subfamily. As to quaternary structure, homodimer.

It catalyses the reaction orotidine 5'-phosphate + H(+) = UMP + CO2. It functions in the pathway pyrimidine metabolism; UMP biosynthesis via de novo pathway; UMP from orotate: step 2/2. Functionally, catalyzes the decarboxylation of orotidine 5'-monophosphate (OMP) to uridine 5'-monophosphate (UMP). This is Orotidine 5'-phosphate decarboxylase from Gluconobacter oxydans (strain 621H) (Gluconobacter suboxydans).